We begin with the raw amino-acid sequence, 160 residues long: Putative antiporter subunit mnhE2 (160 aa).

3 helical membrane passes run 22–42 (HFKF…IYIL), 55–75 (IWVA…SSIS), and 100–120 (SDWS…STVI).

It belongs to the CPA3 antiporters (TC 2.A.63) subunit E family. In terms of assembly, may form a heterooligomeric complex that consists of seven subunits: mnhA2, mnhB2, mnhC2, mnhD2, mnhE2, mnhF2 and mnhG2.

It is found in the cell membrane. This chain is Putative antiporter subunit mnhE2 (mnhE2), found in Staphylococcus aureus (strain USA300).